Reading from the N-terminus, the 635-residue chain is 1-deoxy-D-xylulose-5-phosphate synthase (635 aa).

Residues histidine 78 and 119 to 121 contribute to the thiamine diphosphate site; that span reads GHA. Residue aspartate 150 participates in Mg(2+) binding. Residues 151–152, asparagine 179, phenylalanine 291, and glutamate 376 each bind thiamine diphosphate; that span reads GS. A Mg(2+)-binding site is contributed by asparagine 179.

The protein belongs to the transketolase family. DXPS subfamily. Homodimer. The cofactor is Mg(2+). It depends on thiamine diphosphate as a cofactor.

It catalyses the reaction D-glyceraldehyde 3-phosphate + pyruvate + H(+) = 1-deoxy-D-xylulose 5-phosphate + CO2. Its pathway is metabolic intermediate biosynthesis; 1-deoxy-D-xylulose 5-phosphate biosynthesis; 1-deoxy-D-xylulose 5-phosphate from D-glyceraldehyde 3-phosphate and pyruvate: step 1/1. Its function is as follows. Catalyzes the acyloin condensation reaction between C atoms 2 and 3 of pyruvate and glyceraldehyde 3-phosphate to yield 1-deoxy-D-xylulose-5-phosphate (DXP). The protein is 1-deoxy-D-xylulose-5-phosphate synthase of Chlorobaculum tepidum (strain ATCC 49652 / DSM 12025 / NBRC 103806 / TLS) (Chlorobium tepidum).